The following is a 208-amino-acid chain: Fibroblast growth factor-binding protein 2 (208 aa).

The first 19 residues, 1–19 (MKRVALLFLVVICGMGGLG), serve as a signal peptide directing secretion. Intrachain disulfides connect Cys-43-Cys-59, Cys-68-Cys-102, and Cys-77-Cys-113. The segment at 130 to 181 (EPEDGANRDKSSQKTSASVRGAGKSSVKKTGKPAVLPRIKPTQHGQGSENET) is disordered. An intrachain disulfide couples Cys-191 to Cys-199.

This sequence belongs to the fibroblast growth factor-binding protein family.

Its subcellular location is the secreted. The protein localises to the extracellular space. This Gallus gallus (Chicken) protein is Fibroblast growth factor-binding protein 2 (FGFBP2).